The chain runs to 396 residues: CCA-adding enzyme (396 aa).

Residues glycine 27 and arginine 30 each coordinate ATP. CTP contacts are provided by glycine 27 and arginine 30. Residues aspartate 40 and aspartate 42 each coordinate Mg(2+). Residues arginine 111, aspartate 154, arginine 157, arginine 160, and arginine 163 each coordinate ATP. Positions 111, 154, 157, 160, and 163 each coordinate CTP.

This sequence belongs to the tRNA nucleotidyltransferase/poly(A) polymerase family. Bacterial CCA-adding enzyme type 3 subfamily. In terms of assembly, homodimer. The cofactor is Mg(2+).

The enzyme catalyses a tRNA precursor + 2 CTP + ATP = a tRNA with a 3' CCA end + 3 diphosphate. It carries out the reaction a tRNA with a 3' CCA end + 2 CTP + ATP = a tRNA with a 3' CCACCA end + 3 diphosphate. Catalyzes the addition and repair of the essential 3'-terminal CCA sequence in tRNAs without using a nucleic acid template. Adds these three nucleotides in the order of C, C, and A to the tRNA nucleotide-73, using CTP and ATP as substrates and producing inorganic pyrophosphate. tRNA 3'-terminal CCA addition is required both for tRNA processing and repair. Also involved in tRNA surveillance by mediating tandem CCA addition to generate a CCACCA at the 3' terminus of unstable tRNAs. While stable tRNAs receive only 3'-terminal CCA, unstable tRNAs are marked with CCACCA and rapidly degraded. This chain is CCA-adding enzyme, found in Bacillus velezensis (strain DSM 23117 / BGSC 10A6 / LMG 26770 / FZB42) (Bacillus amyloliquefaciens subsp. plantarum).